We begin with the raw amino-acid sequence, 295 residues long: MMKKCPSELQLEAFIREEAGAGDRKPGVLSPGDGARKSGLFSPGDGEMSVLDQSTLDGSGGGHQLWWPESVRTPPRAAAAFSATADERTPASISDDPKPTTSANHAPESDSDSDCDSLLEAERSPRLRGTKSTETKRIRRMVSNRESARRSRRRKQAQLSELESQVEQLKGENSSLFKQLTESSQQFNTAVTDNRILKSDVEALRVKVKMAEDMVARAAMSCGLGQLGLAPLLSSRKMCQALDMLSLPRNDACGFKGLNLGRQVQNSPVQSAASLESLDNRISSEVTSCSADVWP.

Residues 16–26 show a composition bias toward basic and acidic residues; it reads REEAGAGDRKP. Positions 16 to 157 are disordered; sequence REEAGAGDRK…ARRSRRRKQA (142 aa). Over residues 109 to 119 the composition is skewed to acidic residues; that stretch reads SDSDSDCDSLL. Basic and acidic residues predominate over residues 120–136; sequence EAERSPRLRGTKSTETK. The bZIP domain occupies 134-197; it reads ETKRIRRMVS…NTAVTDNRIL (64 aa). The basic motif stretch occupies residues 136 to 155; the sequence is KRIRRMVSNRESARRSRRRK. A leucine-zipper region spans residues 162 to 176; the sequence is LESQVEQLKGENSSL.

Homodimer.

Its subcellular location is the nucleus. Functionally, probable transcription factor that binds to the DNA specific sequence 5'-TGAGTCA-3' found in seed storage protein gene promoters. May function as a negative regulator in cold and drought stress responses. The chain is bZIP transcription factor RISBZ5 from Oryza sativa subsp. japonica (Rice).